We begin with the raw amino-acid sequence, 431 residues long: Putative helicase 055L (431 aa).

The Helicase ATP-binding domain maps to 73–222 (WGHVTSKGYC…ALGAFFGRED (150 aa)). 86 to 93 (CPPGFGKT) contributes to the ATP binding site. The DEAH box signature appears at 175–178 (DEAH). A disordered region spans residues 403 to 431 (KCDASRPSQSTPTPTGSSQPAPRTRRPQR). Over residues 407 to 424 (SRPSQSTPTPTGSSQPAP) the composition is skewed to low complexity.

In Frog virus 3 (isolate Goorha) (FV-3), this protein is Putative helicase 055L.